A 397-amino-acid polypeptide reads, in one-letter code: Ribosomal RNA large subunit methyltransferase I (397 aa).

Residues 2–79 (TAAIYLVKGR…KEEINKAFFV (78 aa)) enclose the PUA domain.

Belongs to the methyltransferase superfamily. RlmI family.

It is found in the cytoplasm. The enzyme catalyses cytidine(1962) in 23S rRNA + S-adenosyl-L-methionine = 5-methylcytidine(1962) in 23S rRNA + S-adenosyl-L-homocysteine + H(+). Functionally, specifically methylates the cytosine at position 1962 (m5C1962) of 23S rRNA. The protein is Ribosomal RNA large subunit methyltransferase I of Vibrio parahaemolyticus serotype O3:K6 (strain RIMD 2210633).